The following is a 137-amino-acid chain: MLSPKRVKFRKRQRGRLKGTDERGSSVSFGEFGLKAVTSGRLTARQIEAARITINRQVKRGGKLWIRIFPHTPITKKPAETRMGKGKGNPEFWIAEIRPGRILFEMSGIDEETAEKALSLASYKLPIHTEFVKRSAL.

Positions 1-17 (MLSPKRVKFRKRQRGRL) are enriched in basic residues. The segment at 1–24 (MLSPKRVKFRKRQRGRLKGTDERG) is disordered.

The protein belongs to the universal ribosomal protein uL16 family. As to quaternary structure, part of the 50S ribosomal subunit.

Its function is as follows. Binds 23S rRNA and is also seen to make contacts with the A and possibly P site tRNAs. The sequence is that of Large ribosomal subunit protein uL16 from Leptospira borgpetersenii serovar Hardjo-bovis (strain JB197).